Reading from the N-terminus, the 207-residue chain is Large ribosomal subunit protein uL4 (207 aa).

The tract at residues 48–78 (THKVKTRSEVRGGGRKPWRQKGTGRARQGSI) is disordered. Positions 60-71 (GGRKPWRQKGTG) are enriched in basic residues.

It belongs to the universal ribosomal protein uL4 family. In terms of assembly, part of the 50S ribosomal subunit.

One of the primary rRNA binding proteins, this protein initially binds near the 5'-end of the 23S rRNA. It is important during the early stages of 50S assembly. It makes multiple contacts with different domains of the 23S rRNA in the assembled 50S subunit and ribosome. Its function is as follows. Forms part of the polypeptide exit tunnel. This is Large ribosomal subunit protein uL4 from Bacillus pumilus (strain SAFR-032).